We begin with the raw amino-acid sequence, 116 residues long: Phosphoribosyl-AMP cyclohydrolase (116 aa).

Asp-85 contacts Mg(2+). Position 86 (Cys-86) interacts with Zn(2+). Mg(2+) contacts are provided by Asp-87 and Asp-89. Cys-102 and Cys-109 together coordinate Zn(2+).

The protein belongs to the PRA-CH family. As to quaternary structure, homodimer. The cofactor is Mg(2+). It depends on Zn(2+) as a cofactor.

The protein localises to the cytoplasm. The enzyme catalyses 1-(5-phospho-beta-D-ribosyl)-5'-AMP + H2O = 1-(5-phospho-beta-D-ribosyl)-5-[(5-phospho-beta-D-ribosylamino)methylideneamino]imidazole-4-carboxamide. Its pathway is amino-acid biosynthesis; L-histidine biosynthesis; L-histidine from 5-phospho-alpha-D-ribose 1-diphosphate: step 3/9. Catalyzes the hydrolysis of the adenine ring of phosphoribosyl-AMP. The sequence is that of Phosphoribosyl-AMP cyclohydrolase from Thermobifida fusca (strain YX).